Here is a 302-residue protein sequence, read N- to C-terminus: Protoheme IX farnesyltransferase 1 (302 aa).

8 consecutive transmembrane segments (helical) span residues 27–47 (VVAL…VTDF), 49–69 (WIQA…AAAF), 98–118 (SVAI…YAWV), 121–141 (LTAW…TMYL), 149–169 (IVIA…AVTG), 175–195 (AWLL…ALAI), 228–248 (LLTL…IYLF), and 281–301 (IYHL…GMVL).

Belongs to the UbiA prenyltransferase family. Protoheme IX farnesyltransferase subfamily.

Its subcellular location is the cell inner membrane. It carries out the reaction heme b + (2E,6E)-farnesyl diphosphate + H2O = Fe(II)-heme o + diphosphate. It participates in porphyrin-containing compound metabolism; heme O biosynthesis; heme O from protoheme: step 1/1. Its function is as follows. Converts heme B (protoheme IX) to heme O by substitution of the vinyl group on carbon 2 of heme B porphyrin ring with a hydroxyethyl farnesyl side group. The protein is Protoheme IX farnesyltransferase 1 of Vibrio parahaemolyticus serotype O3:K6 (strain RIMD 2210633).